The following is a 159-amino-acid chain: RNA pyrophosphohydrolase (159 aa).

The region spanning 6–149 (GYRPNVGIVI…KRNVYRRMMK (144 aa)) is the Nudix hydrolase domain. Residues 38-59 (GGINSGETAEQAMFRELFEEVG) carry the Nudix box motif.

The protein belongs to the Nudix hydrolase family. RppH subfamily. Requires a divalent metal cation as cofactor.

Accelerates the degradation of transcripts by removing pyrophosphate from the 5'-end of triphosphorylated RNA, leading to a more labile monophosphorylated state that can stimulate subsequent ribonuclease cleavage. The sequence is that of RNA pyrophosphohydrolase from Baumannia cicadellinicola subsp. Homalodisca coagulata.